Consider the following 545-residue polypeptide: DNA mismatch repair protein MutL (545 aa).

Residues 516 to 545 (GRRSGARGGGEARPRPQEESFPEAPLPREP) form a disordered region.

It belongs to the DNA mismatch repair MutL/HexB family.

This protein is involved in the repair of mismatches in DNA. It is required for dam-dependent methyl-directed DNA mismatch repair. May act as a 'molecular matchmaker', a protein that promotes the formation of a stable complex between two or more DNA-binding proteins in an ATP-dependent manner without itself being part of a final effector complex. The protein is DNA mismatch repair protein MutL of Thermus thermophilus (strain ATCC BAA-163 / DSM 7039 / HB27).